We begin with the raw amino-acid sequence, 359 residues long: Medium-wave-sensitive opsin 1 (359 aa).

The Extracellular portion of the chain corresponds to 1-47 (MAQQLTGEQTLDHYEDSTQASIFTYTNSNSTRGPFEGPNYHIAPRWV). Positions 12 to 38 (DHYEDSTQASIFTYTNSNSTRGPFEGP) are required for 11-cis-retinal regeneration. Asparagine 29 carries N-linked (GlcNAc...) asparagine glycosylation. Residues 48 to 72 (YHLTSTWMILVVIASVFTNGLVLAA) form a helical membrane-spanning segment. Topologically, residues 73-84 (TMRFKKLRHPLN) are cytoplasmic. The helical transmembrane segment at 85–110 (WILVNLAVADLAETIIASTISVVNQI) threads the bilayer. Topologically, residues 111–124 (YGYFVLGHPLCVIE) are extracellular. Residues cysteine 121 and cysteine 198 are joined by a disulfide bond. Residues 125–144 (GYIVSLCGITGLWSLAIISW) traverse the membrane as a helical segment. The Cytoplasmic segment spans residues 145-163 (ERWLVVCKPFGNVRFDAKL). A helical transmembrane segment spans residues 164–187 (ATVGIVFSWVWAAVWTAPPIFGWS). The Extracellular segment spans residues 188 to 213 (RYWPYGLKTSCGPDVFSGTSYPGVQS). Residues 214-241 (YMMVLMVTCCIFPLSIIVLCYLQVWLAI) form a helical membrane-spanning segment. Topologically, residues 242-263 (RAVAKQQKESESTQKAEKEVTR) are cytoplasmic. Residues 264 to 287 (MVVVMVFAYCLCWGPYTFFACFAT) traverse the membrane as a helical segment. At 288–295 (AHPGYAFH) the chain is on the extracellular side. A helical membrane pass occupies residues 296–320 (PLVASLPSYFAKSATIYNPIIYVFM). The residue at position 307 (lysine 307) is an N6-(retinylidene)lysine. Topologically, residues 321-359 (NRQFRNCILQLFGKKVDDSSELSSTSKTEVSSVSSVSPA) are cytoplasmic.

The protein belongs to the G-protein coupled receptor 1 family. Opsin subfamily. Monomer. Homodimer. Homotetramer. In terms of processing, O-glycosylated. Phosphorylated on some or all of the serine and threonine residues present in the C-terminal region. Expressed in cone photoreceptor cells.

The protein resides in the membrane. Its function is as follows. Visual pigments are the light-absorbing molecules that mediate vision. They consist of an apoprotein, opsin, covalently linked to cis-retinal. May increase spectral sensitivity in dim light. In Rattus norvegicus (Rat), this protein is Medium-wave-sensitive opsin 1 (Opn1mw).